Here is a 797-residue protein sequence, read N- to C-terminus: Complex I intermediate-associated protein 84, mitochondrial (797 aa).

The transit peptide at 1-69 directs the protein to the mitochondrion; sequence MRSHLARNAT…ALCTRTSKRT (69 aa).

The protein resides in the mitochondrion. In terms of biological role, chaperone protein involved in the assembly of the mitochondrial NADH:ubiquinone oxidoreductase complex (complex I). The protein is Complex I intermediate-associated protein 84, mitochondrial (cia84) of Neurospora crassa (strain ATCC 24698 / 74-OR23-1A / CBS 708.71 / DSM 1257 / FGSC 987).